A 154-amino-acid polypeptide reads, in one-letter code: UPF0225 protein YE2246 (154 aa).

The protein belongs to the UPF0225 family.

In Yersinia enterocolitica serotype O:8 / biotype 1B (strain NCTC 13174 / 8081), this protein is UPF0225 protein YE2246.